The sequence spans 254 residues: Nickel import ATP-binding protein NikD (254 aa).

In terms of domain architecture, ABC transporter spans 2–241 (PQQIELRNIT…PKHTVTRSLV (240 aa)). Residue 36–43 (GGSGSGKS) coordinates ATP.

It belongs to the ABC transporter superfamily. Nickel importer (TC 3.A.1.5.3) family. The complex is composed of two ATP-binding proteins (NikD and NikE), two transmembrane proteins (NikB and NikC) and a solute-binding protein (NikA).

It localises to the cell inner membrane. The enzyme catalyses Ni(2+)(out) + ATP + H2O = Ni(2+)(in) + ADP + phosphate + H(+). Its function is as follows. Part of the ABC transporter complex NikABCDE involved in nickel import. Responsible for energy coupling to the transport system. The chain is Nickel import ATP-binding protein NikD from Shigella flexneri.